We begin with the raw amino-acid sequence, 745 residues long: Copper-transporting ATPase (745 aa).

The HMA domain maps to Met-1–Lys-67. At Met-1–Lys-83 the chain is on the cytoplasmic side. Cys-12 and Cys-15 together coordinate Cu cation. Residues Leu-84–Ser-104 traverse the membrane as a helical segment. The Extracellular segment spans residues Pro-105 to Ala-124. A helical transmembrane segment spans residues Cys-125–Gln-144. At Gly-145 to His-151 the chain is on the cytoplasmic side. The chain crosses the membrane as a helical span at residues Arg-152–Leu-172. Over Trp-173 to Phe-194 the chain is Extracellular. A helical transmembrane segment spans residues Glu-195–Lys-215. Topologically, residues Asp-216–Lys-343 are cytoplasmic. Residues Val-344–Ile-366 form a helical membrane-spanning segment. Over Ala-367–Ala-379 the chain is Extracellular. A helical transmembrane segment spans residues Leu-380 to Leu-397. At Ala-398–Ile-685 the chain is on the cytoplasmic side. The 4-aspartylphosphate intermediate role is filled by Asp-435. Asp-631 and Asp-635 together coordinate Mg(2+). Residues Lys-686–Gly-705 form a helical membrane-spanning segment. The Extracellular segment spans residues Val-706 to Pro-716. A helical transmembrane segment spans residues Ala-717 to Gln-735. The Cytoplasmic portion of the chain corresponds to Arg-736–His-745.

The protein belongs to the cation transport ATPase (P-type) (TC 3.A.3) family. Type IB subfamily.

It localises to the cell membrane. The enzyme catalyses Cu(2+)(in) + ATP + H2O = Cu(2+)(out) + ADP + phosphate + H(+). In terms of biological role, probably involved in copper export. This chain is Copper-transporting ATPase (copA), found in Helicobacter pylori (Campylobacter pylori).